The chain runs to 517 residues: L-amino-acid oxidase (517 aa).

Residues 1–18 (MNVFFMFSLLFLAALESC) form the signal peptide. The cysteines at positions 29 and 192 are disulfide-linked. Residues 62–63 (MA), 82–83 (EA), Arg90, and 106–109 (GPMR) contribute to the FAD site. Arg109 is a binding site for substrate. A glycan (N-linked (GlcNAc...) asparagine) is linked at Asn191. Val280 lines the FAD pocket. A disulfide bond links Cys350 and Cys431. Tyr391 contributes to the substrate binding site. FAD-binding positions include Glu476 and 483–488 (GWIDST). Position 483–484 (483–484 (GW)) interacts with substrate.

This sequence belongs to the flavin monoamine oxidase family. FIG1 subfamily. As to quaternary structure, homodimer; non-covalently linked. FAD serves as cofactor. Post-translationally, N-glycosylated. As to expression, expressed by the venom gland.

The protein localises to the secreted. The catalysed reaction is an L-alpha-amino acid + O2 + H2O = a 2-oxocarboxylate + H2O2 + NH4(+). Catalyzes an oxidative deamination of predominantly hydrophobic and aromatic L-amino acids, thus producing hydrogen peroxide that may contribute to the diverse toxic effects of this enzyme. Exhibits diverse biological activities, such as hemorrhage, hemolysis, edema, apoptosis of vascular endothelial cells or tumor cell lines, antibacterial and antiparasitic activities, as well as regulation of platelet aggregation. Its effect on platelets is controversial, since it either induces aggregation or inhibits agonist-induced aggregation. These different effects are probably due to different experimental conditions. In Demansia vestigiata (Lesser black whip snake), this protein is L-amino-acid oxidase.